The following is a 117-amino-acid chain: Ribonuclease P protein component (117 aa).

The protein belongs to the RnpA family. Consists of a catalytic RNA component (M1 or rnpB) and a protein subunit.

The enzyme catalyses Endonucleolytic cleavage of RNA, removing 5'-extranucleotides from tRNA precursor.. Functionally, RNaseP catalyzes the removal of the 5'-leader sequence from pre-tRNA to produce the mature 5'-terminus. It can also cleave other RNA substrates such as 4.5S RNA. The protein component plays an auxiliary but essential role in vivo by binding to the 5'-leader sequence and broadening the substrate specificity of the ribozyme. The chain is Ribonuclease P protein component from Staphylococcus aureus (strain MW2).